Consider the following 207-residue polypeptide: Inhibitor of hydrogen peroxide resistance (207 aa).

Positions 163–182 form a DNA-binding region, H-T-H motif; sequence MNYIHQRTRVSRSVVAEVLA.

The protein belongs to the IprA family.

Functionally, involved in oxidative stress resistance. The polypeptide is Inhibitor of hydrogen peroxide resistance (Salmonella typhimurium (strain LT2 / SGSC1412 / ATCC 700720)).